Reading from the N-terminus, the 425-residue chain is Protein CLP1 homolog (425 aa).

Residues Glu-18, Lys-59, and Asp-121–Thr-126 each bind ATP.

Belongs to the Clp1 family. Clp1 subfamily.

The protein localises to the nucleus. In terms of biological role, required for endonucleolytic cleavage during polyadenylation-dependent pre-mRNA 3'-end formation. The polypeptide is Protein CLP1 homolog (cbc) (Drosophila grimshawi (Hawaiian fruit fly)).